The following is a 413-amino-acid chain: Probable short/branched chain specific acyl-CoA dehydrogenase (413 aa).

Residues 152–161 (FCLSESGSGS) and 186–188 (WIT) each bind FAD. Serine 161 is a substrate binding site. Substrate-binding positions include tyrosine 208, tyrosine 262, and 270–273 (NEGR). FAD contacts are provided by residues arginine 298, glutamine 309, and 366–370 (SMLGG). The active-site Proton acceptor is glutamate 393. 395 to 397 (TSN) serves as a coordination point for FAD.

The protein belongs to the acyl-CoA dehydrogenase family. As to quaternary structure, homotetramer. It depends on FAD as a cofactor.

The enzyme catalyses 2-methylbutanoyl-CoA + oxidized [electron-transfer flavoprotein] + H(+) = (2E)-2-methylbut-2-enoyl-CoA + reduced [electron-transfer flavoprotein]. It participates in lipid metabolism; mitochondrial fatty acid beta-oxidation. The protein operates within amino-acid degradation; L-isoleucine degradation. Its function is as follows. Probable short and branched chain specific acyl-CoA dehydrogenase that catalyzes the removal of one hydrogen from C-2 and C-3 of the fatty acyl-CoA thioester, resulting in the formation of trans-2-enoyl-CoA. The protein is Probable short/branched chain specific acyl-CoA dehydrogenase (acadsb) of Dictyostelium discoideum (Social amoeba).